A 121-amino-acid polypeptide reads, in one-letter code: Large ribosomal subunit protein eL8 (121 aa).

It belongs to the eukaryotic ribosomal protein eL8 family. In terms of assembly, part of the 50S ribosomal subunit. Probably part of the RNase P complex.

The protein localises to the cytoplasm. In terms of biological role, multifunctional RNA-binding protein that recognizes the K-turn motif in ribosomal RNA, the RNA component of RNase P, box H/ACA, box C/D and box C'/D' sRNAs. The protein is Large ribosomal subunit protein eL8 of Thermoplasma acidophilum (strain ATCC 25905 / DSM 1728 / JCM 9062 / NBRC 15155 / AMRC-C165).